The chain runs to 212 residues: Nitric oxide synthase (212 aa).

Y11 is a heme b binding site. The tract at residues 30 to 50 (KKRAIGFKKLAKAVKFSTKLM) is calmodulin-binding. The Flavodoxin-like domain maps to 60–212 (ATILYATETG…AVDTLLEELG (153 aa)). Residues 155–175 (SYSDSRKSSSDEPEHKDNFES) form a disordered region. The segment covering 158–173 (DSRKSSSDEPEHKDNF) has biased composition (basic and acidic residues). 186–212 (AFGLGSRAYPHFCAFARAVDTLLEELG) lines the FMN pocket.

Belongs to the NOS family. Heme b is required as a cofactor. The cofactor is FAD. Requires FMN as cofactor.

The catalysed reaction is 2 L-arginine + 3 NADPH + 4 O2 + H(+) = 2 L-citrulline + 2 nitric oxide + 3 NADP(+) + 4 H2O. In terms of biological role, produces nitric oxide (NO) which is a messenger molecule with diverse functions throughout the body. This Squalus acanthias (Spiny dogfish) protein is Nitric oxide synthase.